A 205-amino-acid polypeptide reads, in one-letter code: Molybdenum cofactor guanylyltransferase (205 aa).

GTP contacts are provided by residues 14–16 (LAG), Lys27, Asp77, and Asp107. A Mg(2+)-binding site is contributed by Asp107.

Belongs to the MobA family. In terms of assembly, monomer. Mg(2+) serves as cofactor.

Its subcellular location is the cytoplasm. It catalyses the reaction Mo-molybdopterin + GTP + H(+) = Mo-molybdopterin guanine dinucleotide + diphosphate. Transfers a GMP moiety from GTP to Mo-molybdopterin (Mo-MPT) cofactor (Moco or molybdenum cofactor) to form Mo-molybdopterin guanine dinucleotide (Mo-MGD) cofactor. The protein is Molybdenum cofactor guanylyltransferase of Burkholderia ambifaria (strain ATCC BAA-244 / DSM 16087 / CCUG 44356 / LMG 19182 / AMMD) (Burkholderia cepacia (strain AMMD)).